The sequence spans 26 residues: Neprilysin (26 aa).

The protein belongs to the peptidase M13 family. Requires Zn(2+) as cofactor.

The protein localises to the cell membrane. It catalyses the reaction Preferential cleavage of polypeptides between hydrophobic residues, particularly with Phe or Tyr at P1'.. The enzyme catalyses substance P + H2O = substance P(1-9) + L-Leu-L-Met-NH2. It carries out the reaction substance P + H2O = substance P(1-7) + L-Phe-Gly-L-Leu-L-Met-NH2. The catalysed reaction is neurotensin + H2O = neurotensin(1-11) + L-isoleucyl-L-leucine. It catalyses the reaction neurotensin + H2O = neurotensin(1-10) + L-tyrosyl-L-isoleucyl-L-leucine. Its function is as follows. Thermolysin-like specificity, but is almost confined on acting on polypeptides of up to 30 amino acids. Biologically important in the destruction of opioid peptides such as Met- and Leu-enkephalins by cleavage of a Gly-Phe bond. Catalyzes cleavage of bradykinin, substance P and neurotensin peptides. Able to cleave angiotensin-1, angiotensin-2 and angiotensin 1-9. Involved in the degradation of atrial natriuretic factor (ANF) and brain natriuretic factor (BNP(1-32)). Displays UV-inducible elastase activity toward skin preelastic and elastic fibers. This chain is Neprilysin (MME), found in Sus scrofa (Pig).